Consider the following 349-residue polypeptide: Anthranilate phosphoribosyltransferase (349 aa).

5-phospho-alpha-D-ribose 1-diphosphate is bound by residues glycine 82, 85–86, 92–95, 110–118, and serine 122; these read GD, NVST, and KHGNRGVSS. Glycine 82 contributes to the anthranilate binding site. Serine 94 serves as a coordination point for Mg(2+). Position 113 (asparagine 113) interacts with anthranilate. Arginine 168 contacts anthranilate. Mg(2+) is bound by residues aspartate 227 and glutamate 228.

It belongs to the anthranilate phosphoribosyltransferase family. In terms of assembly, homodimer. Mg(2+) is required as a cofactor.

It catalyses the reaction N-(5-phospho-beta-D-ribosyl)anthranilate + diphosphate = 5-phospho-alpha-D-ribose 1-diphosphate + anthranilate. It participates in amino-acid biosynthesis; L-tryptophan biosynthesis; L-tryptophan from chorismate: step 2/5. Catalyzes the transfer of the phosphoribosyl group of 5-phosphorylribose-1-pyrophosphate (PRPP) to anthranilate to yield N-(5'-phosphoribosyl)-anthranilate (PRA). The protein is Anthranilate phosphoribosyltransferase of Acinetobacter baumannii (strain ATCC 17978 / DSM 105126 / CIP 53.77 / LMG 1025 / NCDC KC755 / 5377).